The primary structure comprises 310 residues: Probable plastid-lipid-associated protein 2, chloroplastic (310 aa).

Residues 1-59 constitute a chloroplast transit peptide; the sequence is MATVQLSTQFSCQTRVSISPNSKSISKPPFLVPVTSIIHRPMISTGGIAVSPRRVFKVR. T61 bears the Phosphothreonine mark. Positions 65–94 form a coiled coil; that stretch reads EIGSALLAAEEAIEDVEETERLKRSLVDSL.

It belongs to the PAP/fibrillin family.

It localises to the plastid. Its subcellular location is the chloroplast. The protein localises to the plastoglobule. Functionally, probably involved in light/cold stress-related jasmonate (JA) biosynthesis. In Arabidopsis thaliana (Mouse-ear cress), this protein is Probable plastid-lipid-associated protein 2, chloroplastic (PAP2).